Consider the following 345-residue polypeptide: Eukaryotic translation initiation factor 3 subunit F (345 aa).

The MPN domain occupies Val30–Gly166. The interval Gly308 to Ala345 is disordered. Residues Gln322 to Gly331 are compositionally biased toward gly residues. The span at Asn335–Ala345 shows a compositional bias: basic and acidic residues.

The protein belongs to the eIF-3 subunit F family. In terms of assembly, component of the eukaryotic translation initiation factor 3 (eIF-3) complex.

It is found in the cytoplasm. Its function is as follows. Component of the eukaryotic translation initiation factor 3 (eIF-3) complex, which is involved in protein synthesis of a specialized repertoire of mRNAs and, together with other initiation factors, stimulates binding of mRNA and methionyl-tRNAi to the 40S ribosome. The eIF-3 complex specifically targets and initiates translation of a subset of mRNAs involved in cell proliferation. This Aspergillus clavatus (strain ATCC 1007 / CBS 513.65 / DSM 816 / NCTC 3887 / NRRL 1 / QM 1276 / 107) protein is Eukaryotic translation initiation factor 3 subunit F.